Here is a 703-residue protein sequence, read N- to C-terminus: Polyribonucleotide nucleotidyltransferase (703 aa).

Mg(2+) contacts are provided by D484 and D490. Positions P551–V610 constitute a KH domain. Positions G620–K694 constitute an S1 motif domain.

This sequence belongs to the polyribonucleotide nucleotidyltransferase family. Requires Mg(2+) as cofactor.

The protein resides in the cytoplasm. The enzyme catalyses RNA(n+1) + phosphate = RNA(n) + a ribonucleoside 5'-diphosphate. Functionally, involved in mRNA degradation. Catalyzes the phosphorolysis of single-stranded polyribonucleotides processively in the 3'- to 5'-direction. In Syntrophomonas wolfei subsp. wolfei (strain DSM 2245B / Goettingen), this protein is Polyribonucleotide nucleotidyltransferase.